The sequence spans 576 residues: D-lactate dehydrogenase [cytochrome], mitochondrial (576 aa).

In terms of domain architecture, FAD-binding PCMH-type spans 139 to 320 (EANQRPEIVL…TEATIKCHVR (182 aa)).

Belongs to the FAD-binding oxidoreductase/transferase type 4 family. FAD is required as a cofactor. Requires Zn(2+) as cofactor.

The protein localises to the mitochondrion matrix. It carries out the reaction (R)-lactate + 2 Fe(III)-[cytochrome c] = 2 Fe(II)-[cytochrome c] + pyruvate + 2 H(+). Its function is as follows. Catalyzes the stereospecific oxidation of D-lactate to pyruvate. The polypeptide is D-lactate dehydrogenase [cytochrome], mitochondrial (DLD1) (Kluyveromyces lactis (strain ATCC 8585 / CBS 2359 / DSM 70799 / NBRC 1267 / NRRL Y-1140 / WM37) (Yeast)).